Consider the following 458-residue polypeptide: uncharacterized protein (458 aa).

The protein belongs to the MG032/MG096/MG288 family.

This is an uncharacterized protein from Mycoplasma pneumoniae (strain ATCC 29342 / M129 / Subtype 1) (Mycoplasmoides pneumoniae).